The following is a 248-amino-acid chain: Trypsin I-P1 (248 aa).

The signal sequence occupies residues 1–15; sequence MKFLVLVAFVGVTVA. The propeptide at 16 to 25 is activation peptide; sequence FPISDEDDDK. The region spanning 26–246 is the Peptidase S1 domain; that stretch reads IVGGYSCARS…YVSWIKTTMS (221 aa). 6 disulfides stabilise this stretch: C32/C162, C50/C66, C134/C235, C141/C208, C173/C187, and C198/C222. The active-site Charge relay system is the H65. Ca(2+)-binding residues include E77, N79, and E87. Residue D109 is the Charge relay system of the active site. S202 acts as the Charge relay system in catalysis.

It belongs to the peptidase S1 family. Ca(2+) serves as cofactor. High levels are seen in the pancreas while lower levels are found in the liver, spleen and thymus.

Its subcellular location is the secreted. The protein localises to the extracellular space. The catalysed reaction is Preferential cleavage: Arg-|-Xaa, Lys-|-Xaa.. The polypeptide is Trypsin I-P1 (Gallus gallus (Chicken)).